We begin with the raw amino-acid sequence, 156 residues long: MACRLFWASRVASHLRISVAQRGFSSVVLKDLKYADSHEWVKIDGNKATFGITDHAQDHLGDVVYVELPDVGHSVSQGKSFGAVESVKATSDINSPVSGKVVEVNEELTESPGLVNSSPYEQGWIIKVELSDAGEAEKLMDSDKYSKFCEEEDAKH.

A mitochondrion-targeting transit peptide spans 1–23 (MACRLFWASRVASHLRISVAQRG). Residues 47 to 129 (KATFGITDHA…YEQGWIIKVE (83 aa)) form the Lipoyl-binding domain. An N6-lipoyllysine modification is found at Lys-88. A Phosphoserine modification is found at Ser-131.

The protein belongs to the GcvH family. As to quaternary structure, the glycine cleavage system is composed of four proteins: P, T, L and H. (R)-lipoate is required as a cofactor.

The protein resides in the mitochondrion. Functionally, the glycine decarboxylase (GDC) or glycine cleavage system catalyzes the degradation of glycine. The H protein shuttles the methylamine group of glycine from the P protein to the T protein. The chain is Glycine cleavage system H protein 2, mitochondrial (GDH2) from Arabidopsis thaliana (Mouse-ear cress).